The following is a 285-amino-acid chain: 2-dehydro-3-deoxyphosphooctonate aldolase (285 aa).

This sequence belongs to the KdsA family.

It localises to the cytoplasm. It carries out the reaction D-arabinose 5-phosphate + phosphoenolpyruvate + H2O = 3-deoxy-alpha-D-manno-2-octulosonate-8-phosphate + phosphate. It participates in carbohydrate biosynthesis; 3-deoxy-D-manno-octulosonate biosynthesis; 3-deoxy-D-manno-octulosonate from D-ribulose 5-phosphate: step 2/3. The protein operates within bacterial outer membrane biogenesis; lipopolysaccharide biosynthesis. This Acinetobacter baumannii (strain SDF) protein is 2-dehydro-3-deoxyphosphooctonate aldolase.